The chain runs to 584 residues: A-type ATP synthase subunit A (584 aa).

ATP is bound at residue 233–240 (GPFGSGKT).

The protein belongs to the ATPase alpha/beta chains family. As to quaternary structure, has multiple subunits with at least A(3), B(3), C, D, E, F, H, I and proteolipid K(x).

The protein resides in the cell membrane. It catalyses the reaction ATP + H2O + 4 H(+)(in) = ADP + phosphate + 5 H(+)(out). Its function is as follows. Component of the A-type ATP synthase that produces ATP from ADP in the presence of a proton gradient across the membrane. The A chain is the catalytic subunit. This chain is A-type ATP synthase subunit A, found in Methanobrevibacter smithii (strain ATCC 35061 / DSM 861 / OCM 144 / PS).